The sequence spans 301 residues: Protease HtpX homolog (301 aa).

A run of 2 helical transmembrane segments spans residues 11 to 31 and 34 to 54; these read VLLL…IAGA and NSAF…YSYW. His-138 contacts Zn(2+). Glu-139 is an active-site residue. A Zn(2+)-binding site is contributed by His-142. 2 consecutive transmembrane segments (helical) span residues 154–174 and 188–208; these read AAAV…AAIF and LVGL…QLAI. Glu-213 is a Zn(2+) binding site.

This sequence belongs to the peptidase M48B family. Zn(2+) is required as a cofactor.

It localises to the cell membrane. This chain is Protease HtpX homolog, found in Kocuria rhizophila (strain ATCC 9341 / DSM 348 / NBRC 103217 / DC2201).